Reading from the N-terminus, the 312-residue chain is Urease accessory protein UreD (312 aa).

Positions 1-50 are disordered; that stretch reads MRPLAPDARCAPSRPGRGPWYARRPVTTPSDPPAALREPPPPARRAGKAG.

It belongs to the UreD family. As to quaternary structure, ureD, UreF and UreG form a complex that acts as a GTP-hydrolysis-dependent molecular chaperone, activating the urease apoprotein by helping to assemble the nickel containing metallocenter of UreC. The UreE protein probably delivers the nickel.

It is found in the cytoplasm. Its function is as follows. Required for maturation of urease via the functional incorporation of the urease nickel metallocenter. The polypeptide is Urease accessory protein UreD (Sorangium cellulosum (strain So ce56) (Polyangium cellulosum (strain So ce56))).